Here is a 1034-residue protein sequence, read N- to C-terminus: Potassium-transporting ATPase alpha chain 1 (1034 aa).

Residues 1 to 97 (MGKAENYELY…NALRPPRGTP (97 aa)) lie on the Cytoplasmic side of the membrane. Phosphotyrosine is present on residues Tyr-7 and Tyr-10. Residues 14-41 (LGSGPGGDMTAKMSKKKAGGGGGKKKEK) are disordered. A compositionally biased stretch (basic residues) spans 26-39 (MSKKKAGGGGGKKK). Position 27 is a phosphoserine (Ser-27). A helical transmembrane segment spans residues 98 to 118 (EYVKFARQLAGGLQCLMWVAA). Residues 119-141 (AICLIAFAIQASEGDLTTDDNLY) are Lumenal-facing. The helical transmembrane segment at 142 to 162 (LAVALIAVVVVTGCFGYYQEF) threads the bilayer. Over 163 to 298 (KSTNIIASFK…NEKTPIAIEI (136 aa)) the chain is Cytoplasmic. A helical membrane pass occupies residues 299–318 (EHFVDIIAGLAILFGATFFV). Residues 319 to 330 (VAMCIGYTFLRA) lie on the Lumenal side of the membrane. The chain crosses the membrane as a helical span at residues 331-348 (MVFFMAIVVAYVPEGLLA). Positions 339, 340, 342, and 344 each coordinate K(+). The Cytoplasmic segment spans residues 349–782 (TVTVCLSLTA…EQGRLIFDNL (434 aa)). Asp-386 (4-aspartylphosphate intermediate) is an active-site residue. Positions 386 and 388 each coordinate Mg(2+). Ser-462 and Ser-600 each carry phosphoserine. Positions 727 and 731 each coordinate Mg(2+). The chain crosses the membrane as a helical span at residues 783-802 (KKSIAYTLTKNIPELTPYLI). Glu-796 lines the K(+) pocket. The Lumenal portion of the chain corresponds to 803–812 (YITVSVPLPL). Residues 813–833 (GCITILFIELCTDIFPSVSLA) form a helical membrane-spanning segment. Glu-821 contacts K(+). At 834–853 (YEKAESDIMHLRPRNPKRDR) the chain is on the cytoplasmic side. The residue at position 839 (Ser-839) is a Phosphoserine. The chain crosses the membrane as a helical span at residues 854 to 876 (LVNEPLAAYSYFQIGAIQSFAGF). Residues 877–928 (ADYFTAMAQEGWFPLLCVGLRPQWEDHHLQDLQDSYGQEWTFGQRLYQQYTC) are Lumenal-facing. The chain crosses the membrane as a helical span at residues 929–948 (YTVFFISIEMCQIADVLIRK). Residues 949 to 962 (TRRLSVFQQGFFRN) lie on the Cytoplasmic side of the membrane. Ser-953 carries the phosphoserine; by PKA modification. A helical transmembrane segment spans residues 963 to 981 (KILVIAIVFQVCIGCFLCY). Topologically, residues 982 to 996 (CPGMPNIFNFMPIRF) are lumenal. Residues 997-1017 (QWWLVPMPFGLLIFVYDEIRK) traverse the membrane as a helical segment. Residues 1018 to 1034 (LGVRCCPGSWWDQELYY) are Cytoplasmic-facing.

This sequence belongs to the cation transport ATPase (P-type) (TC 3.A.3) family. Type IIC subfamily. In terms of assembly, the gastric H(+)/K(+) ATPase pump is composed of the catalytic alpha subunit ATP4A and the regulatory beta subunit ATP4B. Interacts (via the P-domain) with ATP4B (via N-terminus); this interaction stabilizes the lumenal-open E2 conformation state and prevents the reverse reaction of the transport cycle. In terms of tissue distribution, expressed in parietal cells (at protein level).

It localises to the apical cell membrane. It carries out the reaction K(+)(out) + ATP + H2O + H(+)(in) = K(+)(in) + ADP + phosphate + 2 H(+)(out). The catalytic subunit of the gastric H(+)/K(+) ATPase pump which transports H(+) ions in exchange for K(+) ions across the apical membrane of parietal cells. Uses ATP as an energy source to pump H(+) ions to the gastric lumen while transporting K(+) ion from the lumen into the cell. Remarkably generates a million-fold proton gradient across the gastric parietal cell membrane, acidifying the gastric juice down to pH 1. Within a transport cycle, the transfer of a H(+) ion across the membrane is coupled to ATP hydrolysis and is associated with a transient phosphorylation that shifts the pump conformation from inward-facing (E1) to outward-facing state (E2). The release of the H(+) ion in the stomach lumen is followed by binding of K(+) ion converting the pump conformation back to the E1 state. The protein is Potassium-transporting ATPase alpha chain 1 of Mus musculus (Mouse).